The sequence spans 90 residues: Protein P18 (90 aa).

The next 3 helical transmembrane spans lie at Met-1–Leu-21, Gly-37–Ile-57, and Pro-60–Ile-80.

The protein resides in the virion membrane. Functionally, component of the phage injection machinery. Required for DNA injection in the membrane transformation event. Involved in the formation of the membrane tail tube to connect the virus interior with the host cytosol. Essential for viral infectivity. This Acinetobacter calcoaceticus (Arthrobacter siderocapsulatus) protein is Protein P18 (XVIII).